A 346-amino-acid polypeptide reads, in one-letter code: Anthranilate phosphoribosyltransferase (346 aa).

5-phospho-alpha-D-ribose 1-diphosphate contacts are provided by residues glycine 88, 91-92 (GD), threonine 96, 98-101 (NIST), 116-124 (KHGNRAVSS), and alanine 128. Residue glycine 88 coordinates anthranilate. Residue serine 100 coordinates Mg(2+). Asparagine 119 lines the anthranilate pocket. Anthranilate is bound at residue arginine 174. Mg(2+) contacts are provided by aspartate 233 and glutamate 234.

This sequence belongs to the anthranilate phosphoribosyltransferase family. In terms of assembly, homodimer. Mg(2+) is required as a cofactor.

The catalysed reaction is N-(5-phospho-beta-D-ribosyl)anthranilate + diphosphate = 5-phospho-alpha-D-ribose 1-diphosphate + anthranilate. It participates in amino-acid biosynthesis; L-tryptophan biosynthesis; L-tryptophan from chorismate: step 2/5. In terms of biological role, catalyzes the transfer of the phosphoribosyl group of 5-phosphorylribose-1-pyrophosphate (PRPP) to anthranilate to yield N-(5'-phosphoribosyl)-anthranilate (PRA). The polypeptide is Anthranilate phosphoribosyltransferase (Paramagnetospirillum magneticum (strain ATCC 700264 / AMB-1) (Magnetospirillum magneticum)).